The chain runs to 223 residues: Probable tRNA-splicing endonuclease subunit tsp-1 (223 aa).

Residues 1–55 are disordered; it reads MESGSTPPTDKQIRENEQDGTGHQGKLLARPTSTRQQQQQQQQQPSHSVSQSVSQ. Residues 30–55 show a composition bias toward low complexity; it reads RPTSTRQQQQQQQQQPSHSVSQSVSQ.

Belongs to the SEN15 family. TRNA splicing endonuclease is a heterotetramer composed of tsp-2/sen2, tsp-1/sen15, tsp-4/sen34 and tsp-5/sen54. Interacts directly with tsp-4/sen34.

Non-catalytic subunit of the tRNA-splicing endonuclease complex, a complex responsible for identification and cleavage of the splice sites in pre-tRNA. It cleaves pre-tRNA at the 5' and 3' splice sites to release the intron. The products are an intron and two tRNA half-molecules bearing 2',3' cyclic phosphate and 5'-OH termini. There are no conserved sequences at the splice sites, but the intron is invariably located at the same site in the gene, placing the splice sites an invariant distance from the constant structural features of the tRNA body. This chain is Probable tRNA-splicing endonuclease subunit tsp-1 (tsp-1), found in Neurospora crassa (strain ATCC 24698 / 74-OR23-1A / CBS 708.71 / DSM 1257 / FGSC 987).